We begin with the raw amino-acid sequence, 147 residues long: Transcriptional regulator MraZ (147 aa).

SpoVT-AbrB domains lie at 5–50 (AIAL…PLSA) and 79–122 (AQEE…SDAG).

It belongs to the MraZ family. Forms oligomers.

The protein localises to the cytoplasm. Its subcellular location is the nucleoid. The sequence is that of Transcriptional regulator MraZ from Aromatoleum aromaticum (strain DSM 19018 / LMG 30748 / EbN1) (Azoarcus sp. (strain EbN1)).